A 359-amino-acid polypeptide reads, in one-letter code: MTMENKPAGQNGLTYAQAGVDIDAGNLMVEKIKPLVRSTRRPGADGEIGGFGGLFDLKAAGFKGPVLVAANDGVGTKLKIAIDADIHDTVGIDLVAMCVNDLVVQGAEPLFFLDYYATGKLSPDQGVAIVSGIAEGCRQAGCALIGGETAEMPGMYRDGDYDLAGFAVGAAERDRLLPRGDIAEGDIILGLASSGVHSNGFSLVRRIVELSGLGWKSQAPFQPGATLGEALLTPTRIYVKPLLAAIRACDGIKALAHITGGGFPDNIPRVLPKGLAAEIDLPAIAVPPVFSWLAKTGNVEPNEMLRTFNCGIGMIAVVNPAKVDEVIAALAAEGEKVVTLGRMTRREKDGVIYKGQLAL.

This sequence belongs to the AIR synthase family.

The protein localises to the cytoplasm. The enzyme catalyses 2-formamido-N(1)-(5-O-phospho-beta-D-ribosyl)acetamidine + ATP = 5-amino-1-(5-phospho-beta-D-ribosyl)imidazole + ADP + phosphate + H(+). The protein operates within purine metabolism; IMP biosynthesis via de novo pathway; 5-amino-1-(5-phospho-D-ribosyl)imidazole from N(2)-formyl-N(1)-(5-phospho-D-ribosyl)glycinamide: step 2/2. In Brucella melitensis biotype 2 (strain ATCC 23457), this protein is Phosphoribosylformylglycinamidine cyclo-ligase.